The chain runs to 124 residues: Small ribosomal subunit protein uS13 (124 aa).

Positions 94–124 (KGLPVRGQRTKTNARTRKGPKRTVAGKKKAR) are disordered.

It belongs to the universal ribosomal protein uS13 family. Part of the 30S ribosomal subunit. Forms a loose heterodimer with protein S19. Forms two bridges to the 50S subunit in the 70S ribosome.

Functionally, located at the top of the head of the 30S subunit, it contacts several helices of the 16S rRNA. In the 70S ribosome it contacts the 23S rRNA (bridge B1a) and protein L5 of the 50S subunit (bridge B1b), connecting the 2 subunits; these bridges are implicated in subunit movement. Contacts the tRNAs in the A and P-sites. This is Small ribosomal subunit protein uS13 from Pseudarthrobacter chlorophenolicus (strain ATCC 700700 / DSM 12829 / CIP 107037 / JCM 12360 / KCTC 9906 / NCIMB 13794 / A6) (Arthrobacter chlorophenolicus).